A 172-amino-acid chain; its full sequence is Ubiquitin-conjugating enzyme E2 PEX4 (172 aa).

A UBC core domain is found at 14–167 (SASKRLIKEL…VELWCQDSDS (154 aa)). The active-site Glycyl thioester intermediate is the Cys-104.

It belongs to the ubiquitin-conjugating enzyme family.

The enzyme catalyses S-ubiquitinyl-[E1 ubiquitin-activating enzyme]-L-cysteine + [E2 ubiquitin-conjugating enzyme]-L-cysteine = [E1 ubiquitin-activating enzyme]-L-cysteine + S-ubiquitinyl-[E2 ubiquitin-conjugating enzyme]-L-cysteine.. The protein operates within protein modification; protein ubiquitination. Its function is as follows. Ubiquitin-conjugating enzyme E2 that is essential for peroxisome biogenesis and plays a key role in development, pathogenicity, and cell wall integrity. Required for long and very long-chain fatty acid utilization and is involved in lipid droplet accumulation and the elimination of reactive oxygen species. Controls the expression of proteins involved in protein biosynthesis, fatty acid metabolism, cell wall synthesis, oxidation-reduction reactions, as well as of the enzymes involved in the biosynthesis of the mycotoxin deoxynivalenol (DON), including TRI5, TRI6, and TRI10. The sequence is that of Ubiquitin-conjugating enzyme E2 PEX4 from Gibberella zeae (strain ATCC MYA-4620 / CBS 123657 / FGSC 9075 / NRRL 31084 / PH-1) (Wheat head blight fungus).